We begin with the raw amino-acid sequence, 154 residues long: 17.8 kDa class I heat shock protein (154 aa).

Residues 40-154 enclose the sHSP domain; that stretch reads ESSAFANTRI…PEVKSIEISG (115 aa).

It belongs to the small heat shock protein (HSP20) family. Forms oligomeric structures.

It localises to the cytoplasm. This Solanum lycopersicum (Tomato) protein is 17.8 kDa class I heat shock protein.